We begin with the raw amino-acid sequence, 436 residues long: Coiled-coil domain-containing protein 71 (436 aa).

The tract at residues A95–V119 is disordered. Residues T105–L116 are compositionally biased toward polar residues. Phosphoserine is present on S129. 2 disordered regions span residues L210–R258 and A314–R405. A coiled-coil region spans residues K264–K334. Over residues K329 to K340 the composition is skewed to basic residues. Residues Q344–V359 are compositionally biased toward polar residues. The span at P373–A386 shows a compositional bias: basic residues.

This is Coiled-coil domain-containing protein 71 (Ccdc71) from Rattus norvegicus (Rat).